A 260-amino-acid polypeptide reads, in one-letter code: MSILFYVMFLPYLCGIHATNMDKRNLPENSMNSLFIKLIQADLLKNKISKQTVDTKENHQSTIPKPQILLDLDGDDNMKQDFQPVISLEAELVKQQKQRRYKSPRVLLSDSLPLEPPPLYLMDDYIGHSTVVNNRTSRRKRFAEHKGHRGEYSVCDSESLWVTDKMNAIDIRGHQVTVLGEIKTGNSPVKQYFYETRCKEARPVKNGCRGIDDKHWNSQCKTSQTYVRALTSENNKMVGWRWIRIDTSCVCALSRKIGRS.

The signal sequence occupies residues 1–18 (MSILFYVMFLPYLCGIHA). Residues 19-141 (TNMDKRNLPE…VNNRTSRRKR (123 aa)) constitute a propeptide that is removed on maturation. Residue N134 is glycosylated (N-linked (GlcNAc...) asparagine). Disulfide bonds link C155–C220, C198–C249, and C208–C251.

This sequence belongs to the NGF-beta family.

It is found in the secreted. Its function is as follows. Seems to promote the survival of visceral and proprioceptive sensory neurons. This Xenopus laevis (African clawed frog) protein is Neurotrophin-3 (ntf3).